The chain runs to 1050 residues: MADRGSFGFAPRLDIKQLLSEAQHRWLRPAEICEILRNHQKFHIASEPPNRPPSGSLFLFDRKVLRYFRKDGHNWRKKKDGKTVKEAHEKLKVGSIDVLHCYYAHGEDNENFQRRCYWMLEQDLMHIVFVHYLEVKGNRMSTSGTKENHSNSLSGTGSVNVDSTATRSSILSPLCEDADSGDSRQASSSLQQNPEPQTVVPQIMHHQNASTINSYNTTSVLGNRDGWTSAHGNRVKGSNSQRSGDVPAWDASFENSLARYQNLPYNAPLTQTQPSTFGLIPMEGKTEKGSLLTSEHLRNPLQSQVNWQTPVQESVPLQKWPMDSHSGMTDATDLALFGQGAHENFGTFSSLLGSQDQQSSSFQAPFTNNEAAYIPKLGPEDLIYEASANQTLPLRKALLKKEDSLKKVDSFSRWVSKELGEMEDLQMQSSSGGIAWTSVECENAAAGSSLSPSLSEDQRFTMIDFWPKWTQTDSEVEVMVIGTFLLSPQEVTSYSWSCMFGEVEVPADILVDGVLCCHAPPHEVGRVPFYITCSDRFSCSEVREFDFLPGSTRKLNATDIYGANTIETSLHLRFENLLALRCSVQEHHIFENVGEKRRKISKIMLLKDEKEPPLPGTIEKDLTELEAKERLIREEFEDKLYLWLIHKVTEEGKGPNILDEDGQGVLHLAAALGYDWAIKPILAAGVSINFRDANGWSALHWAAFSGREDTVAVLVSLGADAGALADPSPEHPLGKTAADLAYGNGHRGISGFLAESSLTSYLEKLTVDAKENSSADSSGAKAVLTVAERTATPMSYGDVPETLSMKDSLTAVLNATQAADRLHQVFRMQSFQRKQLSELGGDNKFDISDELAVSFAAAKTKKSGHSSGAVHAAAVQIQKKYRGWKKRKEFLLIRQRIVKIQAHVRGHQVRKQYRAIIWSVGLLEKIILRWRRKGSGLRGFKRDTISKPTEPVCPAPQEDDYDFLKEGRKQTEERLQKALTRVKSMAQYPEARAQYRRLLTVVEGFRENEASSSSALKNNTEEAANYNEEDDLIDIDSLLDDDTFMSLAFE.

Positions 15–141 form a DNA-binding region, CG-1; the sequence is IKQLLSEAQH…YLEVKGNRMS (127 aa). Composition is skewed to polar residues over residues 141–171 and 183–196; these read STSG…SSIL and SRQA…NPEP. 2 disordered regions span residues 141–196 and 223–246; these read STSG…NPEP and NRDG…SGDV. ANK repeat units follow at residues 661–690 and 694–723; these read DGQG…SINF and NGWS…DAGA. 2 consecutive IQ domains span residues 870-899 and 893-922; these read VHAA…RIVK and IRQR…SVGL. Residues 918–940 form a calmodulin-binding region; that stretch reads WSVGLLEKIILRWRRKGSGLRGF. Positions 957–985 form a coiled coil; the sequence is QEDDYDFLKEGRKQTEERLQKALTRVKSM. Ser-984 is modified (phosphoserine).

Belongs to the CAMTA family. As to expression, expressed in roots, stems, old leaves, petals, sepals, top of carpels, stigmas, stamen filaments, anthers and siliques, but not in pollen.

The protein localises to the nucleus. Its function is as follows. Transcription activator that binds to the DNA consensus sequence 5'-[ACG]CGCG[GTC]-3'. Regulates transcriptional activity in response to calcium signals. Binds calmodulin in a calcium-dependent manner. Involved in freezing tolerance in association with CAMTA1 and CAMTA3. Contributes together with CAMTA1 and CAMTA3 to the positive regulation of the cold-induced expression of DREB1A/CBF3, DREB1B/CBF1 and DREB1C/CBF2. Involved together with CAMTA3 and CAMTA4 in the positive regulation of a general stress response. Involved in tolerance to aluminum. Binds to the promoter of ALMT1 transporter and contributes to the positive regulation of aluminum-induced expression of ALMT1. The protein is Calmodulin-binding transcription activator 2 of Arabidopsis thaliana (Mouse-ear cress).